Here is a 225-residue protein sequence, read N- to C-terminus: Phosphoribosyltransferase domain-containing protein 1 (225 aa).

A2 is modified (N-acetylalanine). Mg(2+) contacts are provided by E141 and D142. GMP is bound by residues 141 to 149, K173, 194 to 195, and D201; these read EDVVGTGRT and FV. D201 provides a ligand contact to Mg(2+).

The protein belongs to the purine/pyrimidine phosphoribosyltransferase family. Homodimer.

In terms of biological role, has low, barely detectable phosphoribosyltransferase activity (in vitro). Binds GMP, IMP and alpha-D-5-phosphoribosyl 1-pyrophosphate (PRPP). Is not expected to contribute to purine metabolism or GMP salvage. This chain is Phosphoribosyltransferase domain-containing protein 1 (PRTFDC1), found in Homo sapiens (Human).